A 582-amino-acid chain; its full sequence is Proline--tRNA ligase (582 aa).

The protein belongs to the class-II aminoacyl-tRNA synthetase family. ProS type 1 subfamily. In terms of assembly, homodimer.

The protein localises to the cytoplasm. The enzyme catalyses tRNA(Pro) + L-proline + ATP = L-prolyl-tRNA(Pro) + AMP + diphosphate. Catalyzes the attachment of proline to tRNA(Pro) in a two-step reaction: proline is first activated by ATP to form Pro-AMP and then transferred to the acceptor end of tRNA(Pro). As ProRS can inadvertently accommodate and process non-cognate amino acids such as alanine and cysteine, to avoid such errors it has two additional distinct editing activities against alanine. One activity is designated as 'pretransfer' editing and involves the tRNA(Pro)-independent hydrolysis of activated Ala-AMP. The other activity is designated 'posttransfer' editing and involves deacylation of mischarged Ala-tRNA(Pro). The misacylated Cys-tRNA(Pro) is not edited by ProRS. This is Proline--tRNA ligase from Mycobacterium tuberculosis (strain CDC 1551 / Oshkosh).